The chain runs to 146 residues: Probable cyclic pyranopterin monophosphate synthase (146 aa).

Substrate contacts are provided by residues 66–68 (LTH) and 102–103 (ME). Asp117 is an active-site residue.

It belongs to the MoaC family. Homohexamer; trimer of dimers.

The enzyme catalyses (8S)-3',8-cyclo-7,8-dihydroguanosine 5'-triphosphate = cyclic pyranopterin phosphate + diphosphate. The protein operates within cofactor biosynthesis; molybdopterin biosynthesis. Functionally, catalyzes the conversion of (8S)-3',8-cyclo-7,8-dihydroguanosine 5'-triphosphate to cyclic pyranopterin monophosphate (cPMP). The sequence is that of Probable cyclic pyranopterin monophosphate synthase from Aeropyrum pernix (strain ATCC 700893 / DSM 11879 / JCM 9820 / NBRC 100138 / K1).